The chain runs to 160 residues: Large ribosomal subunit protein uL22c (160 aa).

It belongs to the universal ribosomal protein uL22 family. In terms of assembly, part of the 50S ribosomal subunit.

The protein localises to the plastid. It localises to the chloroplast. Functionally, this protein binds specifically to 23S rRNA. In terms of biological role, the globular domain of the protein is located near the polypeptide exit tunnel on the outside of the subunit, while an extended beta-hairpin is found that lines the wall of the exit tunnel in the center of the 70S ribosome. The polypeptide is Large ribosomal subunit protein uL22c (rpl22) (Olimarabidopsis pumila (Dwarf rocket)).